The sequence spans 468 residues: MSKQQIGVVGMAVMGRNLALNIESRGYTVSVFNRSREKTEEVIAENPGKKLVPYYTVQEFVESLETPRRILLMVKAGSGTDSAIDSLKPYLDKGDIIIDGGNTFFQDTIRRNRELSAEGFNFIGTGVSGGEEGALKGPSIMPGGQKEAYELVAPILKQIAAVAEDGEPCVTYIGADGAGHYVKMVHNGIEYGDMQLIAEAYALLKGGLTLSNEELAQTFTEWNEGELSSYLYDITKDIFTKKDEEGKYLVDVILDEAANKGTGKWTSQSSLDLGEPLSLITESVFPRYISSLKDQRVAASKVLSGPQAQPAGDKAEFIEKVRRALYLGKIVSYAQGFSQLRAASDEYNWELNYAEIAKIFRAGCIIRAQFLQKITDAYAQNAGIANLLLAPYFKQIADDYQQALRDVVAYAVQNGIRVPTFSAAIAYYDSYRSAVLPANLIQAQRDYFGAHTYKRTDKEGVFHTEWLE.

NADP(+) contacts are provided by residues 10–15, 33–35, 74–76, and Asn102; these read GMAVMG, NRS, and VKA. Residues Asn102 and 128–130 each bind substrate; that span reads SGG. Catalysis depends on Lys183, which acts as the Proton acceptor. 186–187 is a substrate binding site; that stretch reads HN. The Proton donor role is filled by Glu190. Substrate is bound by residues Tyr191, Lys260, Arg287, Arg445, and His451.

Belongs to the 6-phosphogluconate dehydrogenase family. In terms of assembly, homodimer.

The enzyme catalyses 6-phospho-D-gluconate + NADP(+) = D-ribulose 5-phosphate + CO2 + NADPH. It participates in carbohydrate degradation; pentose phosphate pathway; D-ribulose 5-phosphate from D-glucose 6-phosphate (oxidative stage): step 3/3. Catalyzes the oxidative decarboxylation of 6-phosphogluconate to ribulose 5-phosphate and CO(2), with concomitant reduction of NADP to NADPH. This is 6-phosphogluconate dehydrogenase, decarboxylating (gnd) from Escherichia coli.